We begin with the raw amino-acid sequence, 178 residues long: MSEKQELATFAGGCFWCMVKPFDEQPGIIKVESGYTGGHTVNPTYEEVCTNTTGHREAVQITFDPDIFPYEKLLELYWQQIDPTDDGGQFGDRGESYRTGIYVHHDEQRKLAEASKEKLNESGIFQKPIVTEILDAAPFYPAEEYHQHYYKKNKIHYERYHVGSGRAGFIESHWSDKS.

Residue cysteine 14 is part of the active site.

The protein belongs to the MsrA Met sulfoxide reductase family.

It catalyses the reaction L-methionyl-[protein] + [thioredoxin]-disulfide + H2O = L-methionyl-(S)-S-oxide-[protein] + [thioredoxin]-dithiol. It carries out the reaction [thioredoxin]-disulfide + L-methionine + H2O = L-methionine (S)-S-oxide + [thioredoxin]-dithiol. Its function is as follows. Has an important function as a repair enzyme for proteins that have been inactivated by oxidation. Catalyzes the reversible oxidation-reduction of methionine sulfoxide in proteins to methionine. The polypeptide is Peptide methionine sulfoxide reductase MsrA (Bacillus pumilus (strain SAFR-032)).